The chain runs to 315 residues: Methionyl-tRNA formyltransferase (315 aa).

Residue 111-114 (SLLP) coordinates (6S)-5,6,7,8-tetrahydrofolate.

This sequence belongs to the Fmt family.

It carries out the reaction L-methionyl-tRNA(fMet) + (6R)-10-formyltetrahydrofolate = N-formyl-L-methionyl-tRNA(fMet) + (6S)-5,6,7,8-tetrahydrofolate + H(+). In terms of biological role, attaches a formyl group to the free amino group of methionyl-tRNA(fMet). The formyl group appears to play a dual role in the initiator identity of N-formylmethionyl-tRNA by promoting its recognition by IF2 and preventing the misappropriation of this tRNA by the elongation apparatus. This is Methionyl-tRNA formyltransferase from Flavobacterium johnsoniae (strain ATCC 17061 / DSM 2064 / JCM 8514 / BCRC 14874 / CCUG 350202 / NBRC 14942 / NCIMB 11054 / UW101) (Cytophaga johnsonae).